A 196-amino-acid chain; its full sequence is GTP cyclohydrolase-2 (196 aa).

49 to 53 contributes to the GTP binding site; sequence RVHSE. 3 residues coordinate Zn(2+): Cys54, Cys65, and Cys67. Residues Gln70, 92–94, and Thr114 contribute to the GTP site; that span reads EGR. The Proton acceptor role is filled by Asp126. Arg128 acts as the Nucleophile in catalysis. Thr149 and Lys154 together coordinate GTP.

The protein belongs to the GTP cyclohydrolase II family. Homodimer. It depends on Zn(2+) as a cofactor.

The catalysed reaction is GTP + 4 H2O = 2,5-diamino-6-hydroxy-4-(5-phosphoribosylamino)-pyrimidine + formate + 2 phosphate + 3 H(+). It participates in cofactor biosynthesis; riboflavin biosynthesis; 5-amino-6-(D-ribitylamino)uracil from GTP: step 1/4. Catalyzes the conversion of GTP to 2,5-diamino-6-ribosylamino-4(3H)-pyrimidinone 5'-phosphate (DARP), formate and pyrophosphate. The sequence is that of GTP cyclohydrolase-2 from Shigella dysenteriae serotype 1 (strain Sd197).